The chain runs to 40 residues: MADTTGRIPLWIIGTVTGIPVIGLIGIFFYGSYSGLGSSL.

The helical transmembrane segment at 8 to 28 (IPLWIIGTVTGIPVIGLIGIF) threads the bilayer.

The protein belongs to the PsbJ family. In terms of assembly, PSII is composed of 1 copy each of membrane proteins PsbA, PsbB, PsbC, PsbD, PsbE, PsbF, PsbH, PsbI, PsbJ, PsbK, PsbL, PsbM, PsbT, PsbX, PsbY, PsbZ, Psb30/Ycf12, at least 3 peripheral proteins of the oxygen-evolving complex and a large number of cofactors. It forms dimeric complexes.

Its subcellular location is the plastid. The protein localises to the chloroplast thylakoid membrane. Functionally, one of the components of the core complex of photosystem II (PSII). PSII is a light-driven water:plastoquinone oxidoreductase that uses light energy to abstract electrons from H(2)O, generating O(2) and a proton gradient subsequently used for ATP formation. It consists of a core antenna complex that captures photons, and an electron transfer chain that converts photonic excitation into a charge separation. The sequence is that of Photosystem II reaction center protein J from Citrus sinensis (Sweet orange).